The following is a 119-amino-acid chain: Ribonuclease P protein component (119 aa).

The protein belongs to the RnpA family. Consists of a catalytic RNA component (M1 or rnpB) and a protein subunit.

It carries out the reaction Endonucleolytic cleavage of RNA, removing 5'-extranucleotides from tRNA precursor.. Functionally, RNaseP catalyzes the removal of the 5'-leader sequence from pre-tRNA to produce the mature 5'-terminus. It can also cleave other RNA substrates such as 4.5S RNA. The protein component plays an auxiliary but essential role in vivo by binding to the 5'-leader sequence and broadening the substrate specificity of the ribozyme. This chain is Ribonuclease P protein component, found in Pectobacterium atrosepticum (strain SCRI 1043 / ATCC BAA-672) (Erwinia carotovora subsp. atroseptica).